Reading from the N-terminus, the 235-residue chain is Replication protein (235 aa).

Residue Y149 participates in DNA binding.

It belongs to the Gram-positive plasmids replication protein type 1 family.

Produces a single-strand nick in a specific site of the plasmid, and this nick results in single-strand replication by rolling circle mechanism. The protein is Replication protein (repB) of Bacillus sp.